The chain runs to 270 residues: Non-structural maintenance of chromosomes element 1 homolog (270 aa).

The RING-type; atypical zinc finger occupies C185–K226. The interval L236–R270 is disordered. Composition is skewed to polar residues over residues S237–Q248 and S259–R270.

The protein belongs to the NSE1 family. Component of the SMC5-SMC6 complex.

The protein resides in the nucleus. It is found in the chromosome. It localises to the telomere. The enzyme catalyses S-ubiquitinyl-[E2 ubiquitin-conjugating enzyme]-L-cysteine + [acceptor protein]-L-lysine = [E2 ubiquitin-conjugating enzyme]-L-cysteine + N(6)-ubiquitinyl-[acceptor protein]-L-lysine.. Its function is as follows. RING-type zinc finger-containing E3 ubiquitin ligase that assembles with melanoma antigen protein (MAGE) to catalyze the direct transfer of ubiquitin from E2 ubiquitin-conjugating enzyme to a specific substrate. Within MAGE-RING ubiquitin ligase complex, MAGE stimulates and specifies ubiquitin ligase activity likely through recruitment and/or stabilization of the E2 ubiquitin-conjugating enzyme at the E3:substrate complex. Involved in maintenance of genome integrity, DNA damage response and DNA repair. This is Non-structural maintenance of chromosomes element 1 homolog (nsmce1) from Xenopus tropicalis (Western clawed frog).